The chain runs to 52 residues: Movement protein TGBp3 (52 aa).

The Lumenal portion of the chain corresponds to 1 to 3 (MHE). The chain crosses the membrane as a helical span at residues 4 to 21 (SHLVVILALLLLALWCLS). Residues 22 to 52 (TRPVQPSCHVEINGHSIIVTGNCWHSTQRPH) lie on the Cytoplasmic side of the membrane.

It belongs to the Tymovirales TGBp3 protein family.

It is found in the host endoplasmic reticulum membrane. Its function is as follows. Plays a role in viral cell-to-cell propagation, by facilitating genome transport to neighboring plant cells through plasmosdesmata. May induce the formation of granular vesicles derived from the Endoplasmic reticulum, which align on actin filaments. The sequence is that of Movement protein TGBp3 from Foxtail mosaic virus.